A 995-amino-acid polypeptide reads, in one-letter code: DNA repair protein Rev1 (995 aa).

Residues 35–121 (RKSDLFQGIS…KIVDYKPYLL (87 aa)) enclose the BRCT domain. Disordered regions lie at residues 135–164 (GKPK…DSTK) and 182–211 (VATS…TTAR). Over residues 136–164 (KPKDNGANESKSDVEPPKDKAEVEVDSTK) the composition is skewed to basic and acidic residues. The segment covering 192-211 (ASESKITNLSTTSNNSTTAR) has biased composition (low complexity). One can recognise a UmuC domain in the interval 275–505 (VMHIDMDCFF…MSLDLLPGVG (231 aa)). Asp279 is a binding site for Mg(2+). Residues 361 to 367 (SCSYEAR), Asn373, and Asp421 each bind dCTP. Asp421 is a Mg(2+) binding site. Glu422 is an active-site residue. Positions 696 to 868 (SEMRKDKPIP…HYIRSDQIVA (173 aa)) are interaction with PolI. Residues 878–995 (VNPHILKLIS…IEYIRCIKCS (118 aa)) are interaction with PolH/DNApol-eta.

It belongs to the DNA polymerase type-Y family. In terms of assembly, interacts (via C-terminus) with PolH/DNApol-eta (via C-terminal regions). Interacts (via C-terminus) with PolI. The cofactor is Mg(2+).

It is found in the nucleus. Its function is as follows. Deoxycytidyl transferase involved in DNA repair. Transfers a dCMP residue from dCTP to the 3'-end of a DNA primer in a template-dependent reaction. May assist in the first step in the bypass of abasic lesions by the insertion of a nucleotide opposite the lesion. Required for normal induction of mutations by physical and chemical agents. During homologous recombination (HR) repair of DNA double-strand breaks (DSBs) regulates the extent of repair synthesis. Possibly recruits the DNA polymerase zeta complex or another translesion polymerase to early DSB repair intermediates to initiate repair synthesis, while also blocking the access of more processive polymerases preventing them from acting during the initial stages of HR repair. This chain is DNA repair protein Rev1, found in Drosophila melanogaster (Fruit fly).